Here is a 357-residue protein sequence, read N- to C-terminus: Ribonuclease 3 (357 aa).

Positions 6-155 (IKFIQDQIGY…ILGAIALDSN (150 aa)) constitute an RNase III domain. Glu45 provides a ligand contact to Mg(2+). Asp49 is an active-site residue. The Mg(2+) site is built by Asp141 and Glu144. Residue Glu144 is part of the active site. DRBM domains follow at residues 198 to 267 (PLHC…YLKD) and 285 to 355 (DSIG…FVLE).

It belongs to the ribonuclease III family. Homodimer. The cofactor is Mg(2+).

It is found in the cytoplasm. It catalyses the reaction Endonucleolytic cleavage to 5'-phosphomonoester.. Functionally, digests double-stranded RNA. Involved in the processing of primary rRNA transcript to yield the immediate precursors to the large and small rRNAs (23S and 16S). Processes some mRNAs, and tRNAs when they are encoded in the rRNA operon. Processes pre-crRNA and tracrRNA of type II CRISPR loci if present in the organism. This chain is Ribonuclease 3 (rnc), found in Roseburia hominis (strain DSM 16839 / JCM 17582 / NCIMB 14029 / A2-183).